Here is an 887-residue protein sequence, read N- to C-terminus: Degenerin-like protein unc-105 (887 aa).

The interval 1 to 33 is disordered; that stretch reads MAEDRIKSKLRRPASIESTMSSRTKPRHKPSPM. At 1–93 the chain is on the cytoplasmic side; that stretch reads MAEDRIKSKL…AATADGKWRW (93 aa). A helical membrane pass occupies residues 94 to 114; it reads FWYTAFTICLLALLIQIFFLI. The Extracellular segment spans residues 115–698; the sequence is SKYRQYGKTV…SVLADLGGLT (584 aa). N-linked (GlcNAc...) asparagine glycosylation is found at Asn-244, Asn-450, Asn-473, Asn-581, and Asn-599. The helical transmembrane segment at 699 to 719 threads the bilayer; the sequence is GLWIGASVVSLLEIVTLIVFA. Residues 720 to 887 are Cytoplasmic-facing; the sequence is TQAYVRKRKG…YSAPYEHRKK (168 aa). Disordered stretches follow at residues 794–815 and 859–887; these read AIQE…NGSC and SNSE…HRKK.

The protein belongs to the amiloride-sensitive sodium channel (TC 1.A.6) family. As to expression, expressed in body wall muscle.

The protein localises to the membrane. Functionally, ion channel which is permeable to small monovalent cations. Shown not to be H+-ion gated. May be mechanosensitive and is required for growth and muscle development. The protein is Degenerin-like protein unc-105 (unc-105) of Caenorhabditis elegans.